Here is a 2073-residue protein sequence, read N- to C-terminus: Fatty acid synthase subunit beta (2073 aa).

Residues methionine 1–leucine 459 form an acetyltransferase region. Catalysis depends on serine 270, which acts as the For acetyltransferase activity. The interval alanine 470–leucine 858 is enoyl reductase. Position 1122 is a phosphoserine (serine 1122). The dehydratase stretch occupies residues glycine 1155 to leucine 1644. Catalysis depends on histidine 1361, which acts as the For dehydratase activity. The 110-residue stretch at proline 1558–glutamate 1667 folds into the MaoC-like domain. Positions serine 1645–serine 2073 are malonyl/palmitoyl transferase. Serine 1828 acts as the For malonyltransferase activity in catalysis. Position 2073 is a phosphoserine (serine 2073).

This sequence belongs to the fungal fatty acid synthetase subunit beta family. In terms of assembly, [Alpha(6)beta(6)] hexamers of two multifunctional subunits (alpha and beta).

The enzyme catalyses acetyl-CoA + n malonyl-CoA + 2n NADPH + 4n H(+) = a long-chain-acyl-CoA + n CoA + n CO2 + 2n NADP(+).. The catalysed reaction is holo-[ACP] + acetyl-CoA = acetyl-[ACP] + CoA. It catalyses the reaction holo-[ACP] + malonyl-CoA = malonyl-[ACP] + CoA. It carries out the reaction a (3R)-hydroxyacyl-[ACP] = a (2E)-enoyl-[ACP] + H2O. The enzyme catalyses a 2,3-saturated acyl-[ACP] + NAD(+) = a (2E)-enoyl-[ACP] + NADH + H(+). The catalysed reaction is (9Z)-octadecenoyl-[ACP] + H2O = (9Z)-octadecenoate + holo-[ACP] + H(+). Its function is as follows. Fatty acid synthetase catalyzes the formation of long-chain fatty acids from acetyl-CoA, malonyl-CoA and NADPH. The beta subunit contains domains for: [acyl-carrier-protein] acetyltransferase and malonyltransferase, S-acyl fatty acid synthase thioesterase, enoyl-[acyl-carrier-protein] reductase, and 3-hydroxypalmitoyl-[acyl-carrier-protein] dehydratase. The polypeptide is Fatty acid synthase subunit beta (fas1) (Schizosaccharomyces pombe (strain 972 / ATCC 24843) (Fission yeast)).